The primary structure comprises 100 residues: MLSQVCRFGTITAVKGGVKKQLKFEDDQTLFTVLTEAGLMSADDTCQGNKACGKCICKHVSGKVAAEDDEKEFLEDQPANARLACAITLSGENDGAVFEL.

Residues 1–8 (MLSQVCRF) constitute a propeptide that is removed on maturation. The 2Fe-2S ferredoxin-type domain maps to 9–100 (GTITAVKGGV…GENDGAVFEL (92 aa)). Cys-46, Cys-52, Cys-55, and Cys-85 together coordinate [2Fe-2S] cluster.

The cofactor is [2Fe-2S] cluster.

It is found in the hydrogenosome. In terms of biological role, ferredoxins are iron-sulfur proteins that transfer electrons in a wide variety of metabolic reactions. It links pyruvate:ferredoxin oxidoreductase to hydrogenase. The chain is Ferredoxin from Trichomonas vaginalis.